Here is a 60-residue protein sequence, read N- to C-terminus: Large ribosomal subunit protein bL32 (60 aa).

Residues 1–60 (MAVQQNKKSRSARDMRRSHDALEPNALSVEKSTGEVHLRHHVSPDGFYRGRKVIDKGADE) are disordered. Over residues 11–22 (SARDMRRSHDAL) the composition is skewed to basic and acidic residues.

This sequence belongs to the bacterial ribosomal protein bL32 family.

The protein is Large ribosomal subunit protein bL32 of Stutzerimonas stutzeri (strain A1501) (Pseudomonas stutzeri).